The following is a 521-amino-acid chain: Cholesterol side-chain cleavage enzyme, mitochondrial (521 aa).

A mitochondrion-targeting transit peptide spans 1 to 39; sequence MLAKGLPPRSVLVKGCQTFLSAPREGLGRLRVPTGEGAG. Residue cysteine 462 coordinates heme.

This sequence belongs to the cytochrome P450 family. Interacts with FDX1/adrenodoxin. The cofactor is heme.

Its subcellular location is the mitochondrion inner membrane. The enzyme catalyses 6 reduced [adrenodoxin] + cholesterol + 3 O2 + 6 H(+) = 4-methylpentanal + pregnenolone + 6 oxidized [adrenodoxin] + 4 H2O. It catalyses the reaction 2 reduced [adrenodoxin] + cholesterol + O2 + 2 H(+) = (22R)-hydroxycholesterol + 2 oxidized [adrenodoxin] + H2O. The catalysed reaction is (22R)-hydroxycholesterol + 2 reduced [adrenodoxin] + O2 + 2 H(+) = (20R,22R)-20,22-dihydroxycholesterol + 2 oxidized [adrenodoxin] + H2O. It carries out the reaction (20R,22R)-20,22-dihydroxycholesterol + 2 reduced [adrenodoxin] + O2 + 2 H(+) = 4-methylpentanal + pregnenolone + 2 oxidized [adrenodoxin] + 2 H2O. The protein operates within lipid metabolism; C21-steroid hormone metabolism. It functions in the pathway steroid metabolism; cholesterol metabolism. Functionally, a cytochrome P450 monooxygenase that catalyzes the side-chain hydroxylation and cleavage of cholesterol to pregnenolone, the precursor of most steroid hormones. Catalyzes three sequential oxidation reactions of cholesterol, namely the hydroxylation at C22 followed with the hydroxylation at C20 to yield 20R,22R-hydroxycholesterol that is further cleaved between C20 and C22 to yield the C21-steroid pregnenolone and 4-methylpentanal. Mechanistically, uses molecular oxygen inserting one oxygen atom into a substrate and reducing the second into a water molecule. Two electrons are provided by NADPH via a two-protein mitochondrial transfer system comprising flavoprotein FDXR (adrenodoxin/ferredoxin reductase) and nonheme iron-sulfur protein FDX1 or FDX2 (adrenodoxin/ferredoxin). The chain is Cholesterol side-chain cleavage enzyme, mitochondrial from Homo sapiens (Human).